Consider the following 149-residue polypeptide: uncharacterized protein (149 aa).

The next 2 helical transmembrane spans lie at 91–111 (IFIL…LFHY) and 122–142 (ISIL…ICLL).

It localises to the membrane. This is an uncharacterized protein from Dictyostelium discoideum (Social amoeba).